A 138-amino-acid polypeptide reads, in one-letter code: Superoxide dismutase [Mn] (138 aa).

Residues Gln1, His49, Asp133, and His137 each coordinate Mn(2+).

The protein belongs to the iron/manganese superoxide dismutase family. Mn(2+) serves as cofactor.

It carries out the reaction 2 superoxide + 2 H(+) = H2O2 + O2. Its function is as follows. Destroys superoxide anion radicals which are normally produced within the cells and which are toxic to biological systems. The polypeptide is Superoxide dismutase [Mn] (sodA) (Mycobacteroides chelonae (Mycobacterium chelonae)).